We begin with the raw amino-acid sequence, 1031 residues long: Toll-like receptor 9 (1031 aa).

The first 25 residues, 1-25 (MGPCHGALQPLSLLVQAAMLAVALA), serve as a signal peptide directing secretion. At 26–817 (QGTLPPFLPC…LCLDESLSWD (792 aa)) the chain is on the extracellular side. Cys35 and Cys45 form a disulfide bridge. Position 47–51 (47–51 (WLFLK)) interacts with DNA. LRR repeat units follow at residues 62–85 (RDNV…DFAQ), 87–110 (SNLQ…HFPC), 122–147 (VPTL…SLVS), 150–166 (LSRT…LTGL), 167–190 (HALR…ALEV), 198–221 (LGNL…LPPS), 223–242 (EYLL…DLAN), 243–268 (LTAL…CVEC), 283–306 (LSRL…WFRG), 308–332 (GNLT…AFQG), 333–356 (LAQL…HLTL), 363–386 (LLSL…TLQP), 390–413 (LPML…IFKD), 414–438 (FPGL…ATTG), 470–494 (CKNL…MFAQ), 496–519 (SRLQ…QFVP), 520–543 (LTSL…SFTE), 545–567 (PRLE…VGHN), 574–598 (LPTL…LCST), 600–622 (LWAL…LYLR), 627–650 (LRSL…TLGN), 652–675 (PKSL…SLTL), 676–699 (LPNL…SLPS), 701–723 (TQLQ…FFAL), 724–747 (ATRL…WFGF), and 749–772 (AGSL…AFVD). An N-linked (GlcNAc...) asparagine glycan is attached at Asn64. Residues 72–77 (SNRIHH) and 95–109 (KWNC…MHFP) each bind DNA. Cys98 and Cys110 are disulfide-bonded. A glycan (N-linked (GlcNAc...) asparagine) is linked at Asn129. Residues Tyr132, Arg152, and 179 to 181 (YYK) contribute to the DNA site. An intrachain disulfide couples Cys178 to Cys184. N-linked (GlcNAc...) asparagine glycosylation occurs at Asn200. Tyr208 contributes to the DNA binding site. Residues Asn210 and Asn242 are each glycosylated (N-linked (GlcNAc...) asparagine). Intrachain disulfides connect Cys255/Cys268 and Cys258/Cys265. A lipid anchor (S-palmitoyl cysteine) is attached at Cys258. Arg262 serves as a coordination point for DNA. Residue Cys265 is the site of S-palmitoyl cysteine attachment. Asn309 and Asn340 each carry an N-linked (GlcNAc...) asparagine glycan. Cys470 and Cys500 form a disulfide bridge. Residues Asn472 and Asn513 are each glycosylated (N-linked (GlcNAc...) asparagine). A glycan (N-linked (GlcNAc...) asparagine) is linked at Asn567. N-linked (GlcNAc...) asparagine glycans are attached at residues Asn669 and Asn694. An N-linked (GlcNAc...) asparagine glycan is attached at Asn731. 2 disulfides stabilise this stretch: Cys764-Cys790 and Cys766-Cys809. Residues 818–838 (CFGLSLLVVALGLAMPMLHHL) traverse the membrane as a helical segment. Residues 839–1031 (CGWDLWYCFH…NFCRGPTMAE (193 aa)) are Cytoplasmic-facing. Residues 866 to 1011 (LSYDAFVVFD…SFWAQLGMAL (146 aa)) form the TIR domain.

Belongs to the Toll-like receptor family. Monomer and homodimer. Exists as a monomer in the absence of unmethylated cytidine-phosphate-guanosine (CpG) ligand. Proteolytic processing of an insertion loop (Z-loop) is required for homodimerization upon binding to the unmethylated CpG ligand leading to its activation. Interacts with MYD88 via their respective TIR domains. Interacts with BTK. Interacts (via transmembrane domain) with UNC93B1. Interacts with CD300LH; the interaction may promote full activation of TLR9-triggered innate responses. Interacts with CNPY3 and HSP90B1; this interaction is required for proper folding in the endoplasmic reticulum. Interacts with SMPDL3B. Interacts with CD82; this interaction is essential for TLR9-dependent myddosome formation in response to CpG stimulation. In terms of processing, activated by proteolytic cleavage of the flexible loop between repeats LRR14 and LRR15 within the ectodomain. Cleavage requires UNC93B1. Proteolytically processed by first removing the majority of the ectodomain by either asparagine endopeptidase (AEP) or a cathepsin followed by a trimming event that is solely cathepsin mediated and required for optimal receptor signaling. Post-translationally, palmitoylated by ZDHHC3 in the Golgi regulates TLR9 trafficking from the Golgi to endosomes. Depalmitoylation by PPT1 controls the release of TLR9 from UNC93B1 in endosomes. As to expression, expressed in airway epithelium, vascular endothelium and inflammatory cells in blood vessels of the lungs (at protein level). Highly expressed in pulmonary intravascular macrophages (PIMs) and to a lesser extent in alveolar macrophages, neutrophiles, type-II alveolar epithelial cells and bronchial epithelial cells of the lungs (at protein level). High constitutive intracellular expression in leukocytes including polymorphonuclear leukocytes (PMNs), CD4 and CD8 T cells (at protein level). Expressed throughout the respiratory tract including larynx, upper, middle and lower trachea, and bronchus in isolated equine respiratory epithelial cells (ERECs) and in fully differentiated ERECs cultured at the air-fluid interface (AFI) (at protein level). Constitutively expressed in peripheral blood mononuclear cells (PBMCs), lymph nodes and spleen. The level of expression in PBMCs is about 2- to 3-fold higher than that in lymph nodes and spleen. Very low expression in liver, heart, lung, kidney, small intestine, colon and stomach. Low expression in the airway tissue epithelium of the larynx, upper trachea, middle tranchea, lower trachea, bronchus and spleen, and more abundant expression in mesenteric lymph node. Not expressed in fully differentiated bronchus epithelial cells cultured at the AFI for four weeks. Expressed in gingival tissue.

It localises to the endoplasmic reticulum membrane. It is found in the endosome. Its subcellular location is the lysosome. The protein resides in the cytoplasmic vesicle. The protein localises to the phagosome. It localises to the cell membrane. It is found in the cytoplasm. Its subcellular location is the nucleus. Functionally, key component of innate and adaptive immunity. TLRs (Toll-like receptors) control host immune response against pathogens through recognition of molecular patterns specific to microorganisms. TLR9 is a nucleotide-sensing TLR which is activated by unmethylated cytidine-phosphate-guanosine (CpG) dinucleotides. Acts via MYD88 and TRAF6, leading to NF-kappa-B activation, cytokine secretion and the inflammatory response. Upon CpG stimulation, induces B-cell proliferation, activation, survival and antibody production. In Equus caballus (Horse), this protein is Toll-like receptor 9.